Here is a 445-residue protein sequence, read N- to C-terminus: tRNA modification GTPase MnmE (445 aa).

Residues arginine 24, glutamate 81, and lysine 121 each contribute to the (6S)-5-formyl-5,6,7,8-tetrahydrofolate site. Residues 218–369 (GLTVVIAGPP…LLEALVGFAR (152 aa)) enclose the TrmE-type G domain. GTP-binding positions include 228-233 (NAGKST), 247-253 (SPHAGTT), 272-275 (DTAG), and 350-352 (SAR). 2 residues coordinate Mg(2+): serine 232 and threonine 253. Lysine 445 is a binding site for (6S)-5-formyl-5,6,7,8-tetrahydrofolate.

It belongs to the TRAFAC class TrmE-Era-EngA-EngB-Septin-like GTPase superfamily. TrmE GTPase family. As to quaternary structure, homodimer. Heterotetramer of two MnmE and two MnmG subunits. Requires K(+) as cofactor.

The protein resides in the cytoplasm. Functionally, exhibits a very high intrinsic GTPase hydrolysis rate. Involved in the addition of a carboxymethylaminomethyl (cmnm) group at the wobble position (U34) of certain tRNAs, forming tRNA-cmnm(5)s(2)U34. This chain is tRNA modification GTPase MnmE, found in Bradyrhizobium sp. (strain BTAi1 / ATCC BAA-1182).